An 896-amino-acid chain; its full sequence is MDLNFSATSVSRARWSSAYASDPTVWEQLFETKWSVVSNILERKLSDPEHKVVYDELMSLLENMTNMCTLLMLEANSQPEPIIGPILDKFFTEQILERVLDWSIQLTDSLKSICQLAIIRIFEMIVSDSHSQNHCLLVHKPILNPLFRLCEWFQRADIYWRVSKSENKKTSEAEKMFVLLLNQICTKLVEDRTLLHFFFHSNQFVVFTELIPFLYSAGDTGQLARDAVLLILSVSAEDKSIAEYVTERTSFCQVLTTGLSACFSQLPRIILGDGGERLVEDEYRDFLADYHSALLFCNAIAQTAHSEVVGNIASFFYTGFLTNVIKPAFLQNDREYIGASMVYLQMCLETIVEPVLVRSIVQMILTERDDNGTLFYEIVISYVKGGDKTSVTSLSLIDSFLKLACEDVMLALVFRPLLTNHSATKKQLSVVYKASRGGELSQTYLNCIPICMLEYREAASHALLSSYMYSTRIRMDARSEQCRSWKWKYDGVVAGSFVLPAESDDDATFNVSFSRMSSSRSSTSMTPYVSNRYSNGSHLSHVFNINKVCPLGQPQEQNADLSLSELDDDLEEDKDFILPSIDMEDVSEEMTASKVMTQSTIDYMHISGLDGSESDDALPIRIEDSERSETDSEAPKSNFVLSGWRDVKDMGTFKQLLSKQEVKGEKLDSSEIVDFINQKYDSLKLGEEKKEDIEEEESENETKGKEIKSRIVTDGFSIYNFPERSKLLQTILEGVETLCENELPFNTELFSLIADLATYPQPLLAYYLFDPKEDSSEKHLLTILQGVQTRIDVMAEGIESFEIWIERGFETLKARACRIKQQSTASSPRTSDDHDPTLFYGRSTMAPPGRKPLLREPSRQETLDDQTARRTALAAILLAHLCQMLASIVLQQSLII.

The disordered stretch occupies residues 823 to 865; the sequence is STASSPRTSDDHDPTLFYGRSTMAPPGRKPLLREPSRQETLDD. Positions 853–865 are enriched in basic and acidic residues; that stretch reads LLREPSRQETLDD.

It belongs to the FHIP family.

In Caenorhabditis elegans, this protein is FHIP family protein C05D11.8.